The primary structure comprises 336 residues: MSSAVPLNVGITRSADSGASRADGEKRVLLAEPRGYCAGVDRAVETVEKALEKHGAPIYVRKEIVHNRHVVETLSDQGVVFVDETDEVPEGALLVFSAHGVSPAVHESAAARNLRTIDATCPLVTKVHQEAKRFARDDFDILLIGHEGHEEVEGTAGEAPDHVQLVDGPDSVDAVTVRDESKVIWLSQTTLSVDETMQTVARLRERFPSLQDPPSDDICYATQNRQVAVKAMAPECDLVIVVGSRNSSNSVRLVEVALGAGAKASYLVDYAREVDPAWLDGVRTVGITSGASVPEILVRGVIDLLDEHGFHDVQPVTTANETLVFALPRELRAART.

Position 37 (C37) interacts with [4Fe-4S] cluster. 2 residues coordinate (2E)-4-hydroxy-3-methylbut-2-enyl diphosphate: H66 and H99. Dimethylallyl diphosphate-binding residues include H66 and H99. Isopentenyl diphosphate contacts are provided by H66 and H99. C121 serves as a coordination point for [4Fe-4S] cluster. H149 serves as a coordination point for (2E)-4-hydroxy-3-methylbut-2-enyl diphosphate. H149 is a binding site for dimethylallyl diphosphate. An isopentenyl diphosphate-binding site is contributed by H149. Residue E151 is the Proton donor of the active site. T189 lines the (2E)-4-hydroxy-3-methylbut-2-enyl diphosphate pocket. C219 provides a ligand contact to [4Fe-4S] cluster. S247, S248, N249, and S292 together coordinate (2E)-4-hydroxy-3-methylbut-2-enyl diphosphate. Positions 247, 248, 249, and 292 each coordinate dimethylallyl diphosphate. Residues S247, S248, N249, and S292 each coordinate isopentenyl diphosphate.

This sequence belongs to the IspH family. Requires [4Fe-4S] cluster as cofactor.

The catalysed reaction is isopentenyl diphosphate + 2 oxidized [2Fe-2S]-[ferredoxin] + H2O = (2E)-4-hydroxy-3-methylbut-2-enyl diphosphate + 2 reduced [2Fe-2S]-[ferredoxin] + 2 H(+). It carries out the reaction dimethylallyl diphosphate + 2 oxidized [2Fe-2S]-[ferredoxin] + H2O = (2E)-4-hydroxy-3-methylbut-2-enyl diphosphate + 2 reduced [2Fe-2S]-[ferredoxin] + 2 H(+). The protein operates within isoprenoid biosynthesis; dimethylallyl diphosphate biosynthesis; dimethylallyl diphosphate from (2E)-4-hydroxy-3-methylbutenyl diphosphate: step 1/1. It participates in isoprenoid biosynthesis; isopentenyl diphosphate biosynthesis via DXP pathway; isopentenyl diphosphate from 1-deoxy-D-xylulose 5-phosphate: step 6/6. Its function is as follows. Catalyzes the conversion of 1-hydroxy-2-methyl-2-(E)-butenyl 4-diphosphate (HMBPP) into a mixture of isopentenyl diphosphate (IPP) and dimethylallyl diphosphate (DMAPP). Acts in the terminal step of the DOXP/MEP pathway for isoprenoid precursor biosynthesis. The polypeptide is 4-hydroxy-3-methylbut-2-enyl diphosphate reductase (Rhodococcus opacus (strain B4)).